We begin with the raw amino-acid sequence, 593 residues long: High affinity cGMP-specific 3',5'-cyclic phosphodiesterase 9A (593 aa).

The disordered stretch occupies residues 87-142 (SAGVEDKRTTSRGQSAERPLRDRRVVGLEQPRREGAFESGQVEPRPREPQGCCQEG). Over residues 104-122 (RPLRDRRVVGLEQPRREGA) the composition is skewed to basic and acidic residues. The 322-residue stretch at 236–557 (PRRDVPTYPK…DRYEELKRID (322 aa)) folds into the PDEase domain. The active-site Proton donor is histidine 312. 312–316 (HNFRH) is a 3',5'-cyclic GMP binding site. Residues histidine 316, histidine 352, and aspartate 353 each coordinate Zn(2+). Aspartate 353 is a 3',5'-cyclic GMP binding site. A Mg(2+)-binding site is contributed by aspartate 353. Serine 379 bears the Phosphoserine mark. Residues aspartate 462, tyrosine 484, and 512 to 513 (AQ) contribute to the 3',5'-cyclic GMP site. Aspartate 462 provides a ligand contact to Zn(2+). The interval 564-593 (QKKTDSLTSGATEKSRERSRDVKNSEGDCA) is disordered. The span at 576-593 (EKSRERSRDVKNSEGDCA) shows a compositional bias: basic and acidic residues.

The protein belongs to the cyclic nucleotide phosphodiesterase family. PDE9 subfamily. Homodimer. Requires Zn(2+) as cofactor. Mg(2+) serves as cofactor.

It localises to the cell projection. The protein resides in the ruffle membrane. Its subcellular location is the cytoplasm. The protein localises to the perinuclear region. It is found in the golgi apparatus. It localises to the endoplasmic reticulum. The protein resides in the cell membrane. Its subcellular location is the sarcolemma. It catalyses the reaction 3',5'-cyclic GMP + H2O = GMP + H(+). It participates in purine metabolism; 3',5'-cyclic GMP degradation; GMP from 3',5'-cyclic GMP: step 1/1. Specifically inhibited by a compound named 3r ((R)-2-((1-cyclopentyl-4-hydroxy-1H-pyrazolo[3,4-d]pyrimidin-6- yl)amino)-N-(4-methoxyphenyl)propanamide); the inhibitor forms a hydrogen bond with Tyr-484, Ala-512 and Gln-513. Functionally, specifically hydrolyzes the second messenger cGMP, which is a key regulator of many important physiological processes. Highly specific: compared to other members of the cyclic nucleotide phosphodiesterase family, has the highest affinity and selectivity for cGMP. Specifically regulates natriuretic-peptide-dependent cGMP signaling in heart, acting as a regulator of cardiac hypertrophy in myocytes and muscle. Does not regulate nitric oxide-dependent cGMP in heart. Additional experiments are required to confirm whether its ability to hydrolyze natriuretic-peptide-dependent cGMP is specific to heart or is a general feature of the protein. In brain, involved in cognitive function, such as learning and long-term memory. This is High affinity cGMP-specific 3',5'-cyclic phosphodiesterase 9A (PDE9A) from Pan troglodytes (Chimpanzee).